The primary structure comprises 1367 residues: Histone acetyltransferase HAC2 (1367 aa).

The disordered stretch occupies residues 110-151; that stretch reads TSSIPGSSGSASETNSGSDITKQDFKNDSPSDSKKVQGSSTS. Residues 111 to 127 show a composition bias toward low complexity; sequence SSIPGSSGSASETNSGS. The span at 130–144 shows a compositional bias: basic and acidic residues; it reads TKQDFKNDSPSDSKK. Tandem repeats lie at residues 188-200, 223-235, 251-263, 286-298, 314-326, 349-361, 377-389, 418-430, 432-444, 459-471, 473-485, and 500-512. The segment at 188 to 512 is 12 X 13 AA approximate repeats; it reads KLGTVVDIVE…IGVDIVEPMK (325 aa). The segment at 688-765 adopts a PHD-type zinc-finger fold; the sequence is HQICSPCHSR…EYICPTCLLE (78 aa). Residues 780 to 1213 enclose the CBP/p300-type HAT domain; the sequence is DSGAKDLPET…ILHHLHTSNK (434 aa). Residues 903–905, 922–923, and Trp-978 each bind acetyl-CoA; these read LDS and RT. Residues 1094 to 1157 form a ZZ-type 1; degenerate zinc finger; it reads ELNYSCTRCS…QLSKVQVNGV (64 aa). The Zn(2+) site is built by Cys-1099, Cys-1102, Cys-1123, Cys-1126, Cys-1225, Cys-1228, Cys-1240, Cys-1243, Cys-1249, Cys-1252, His-1261, and His-1263. A ZZ-type 2 zinc finger spans residues 1220–1273; that stretch reads SSSLTCTACKKDVSTTIYFPCLLCPDYRACTGCYTKNRTLRHLHIFPTLPSANR. Residues 1274-1359 form a TAZ-type zinc finger; it reads APSRTVMVLE…NCPVPQCRDR (86 aa).

As to expression, rosette leaves, stems and flowers.

The protein resides in the nucleus. It catalyses the reaction L-lysyl-[protein] + acetyl-CoA = N(6)-acetyl-L-lysyl-[protein] + CoA + H(+). In terms of biological role, acetyltransferase enzyme. Acetylates histones, giving a specific tag for transcriptional activation. No acetyltransferase activity found in vitro. The polypeptide is Histone acetyltransferase HAC2 (HAC2) (Arabidopsis thaliana (Mouse-ear cress)).